A 585-amino-acid chain; its full sequence is Stage II sporulation protein E (585 aa).

A run of 2 helical transmembrane segments spans residues 40-57 and 70-86; these read LGAR…GLYA and SLTA…FVLK. Positions 355-565 constitute a PPM-type phosphatase domain; it reads DTGVAHAAKG…DDMTVVVAKL (211 aa).

Its subcellular location is the cell membrane. It catalyses the reaction O-phospho-L-seryl-[protein] + H2O = L-seryl-[protein] + phosphate. The enzyme catalyses O-phospho-L-threonyl-[protein] + H2O = L-threonyl-[protein] + phosphate. Its function is as follows. Normally needed for pro-sigma E processing during sporulation but can be bypassed in vegetative cells. Activates SpoIIAA by dephosphorylation. This chain is Stage II sporulation protein E (spoIIE), found in Priestia megaterium (Bacillus megaterium).